A 956-amino-acid polypeptide reads, in one-letter code: Replication factor C subunit 1 (956 aa).

2 stretches are compositionally biased toward basic and acidic residues: residues 1 to 15 (MSDIRKWFMKAHEKG) and 50 to 74 (TADRRKTSKYFGKDKTKVKDEKEVE). 2 disordered regions span residues 1 to 206 (MSDI…TPDC) and 286 to 332 (KKSL…AKGK). Residues 158-183 (RGRGGRAAPGASTGGRGRGGGRGGFM) are compositionally biased toward gly residues. 2 stretches are compositionally biased toward basic and acidic residues: residues 186–200 (GERKDPPHKGEKEVP) and 288–298 (SLPERSNKGTE). Residues 202-292 (GTPDCLAGLT…KPVKKSLPER (91 aa)) enclose the BRCT domain. 399–406 (SGTPGIGK) contributes to the ATP binding site. Positions 858–956 (LEPTVDSLRD…GRGSGAKRKR (99 aa)) are disordered. A compositionally biased stretch (acidic residues) spans 866–892 (RDEDGEPLADNEEGNGSDAEEDSEEAT). A compositionally biased stretch (low complexity) spans 916–925 (KGAGSSGSRK).

It belongs to the activator 1 large subunit family. As to quaternary structure, heterotetramer of subunits RFC2, RFC3, RFC4 and RFC5 that can form a complex with RFC1. As to expression, expressed at high levels in flowers and siliques, and at lower levels in roots, stems and leaves.

The protein localises to the nucleus. Its function is as follows. Plays a role as mediator of transcriptional gene silencing (TGS), DNA replication, DNA repair, hypersensitive response (HR) and telomere length regulation. Is required in meiosis for DNA double-strand break (DSB) repair during meiotic homologous recombination. May participate in the RAD51-mediated recombination intermediate repair process. Is important for lagging strand synthesis. Promotes meiotic recombination via a specific pathway for crossovers (COs) that involves the formation of double Holliday Junction (dHJ) intermediates. The chain is Replication factor C subunit 1 (RFC1) from Arabidopsis thaliana (Mouse-ear cress).